The primary structure comprises 164 residues: 6,7-dimethyl-8-ribityllumazine synthase (164 aa).

5-amino-6-(D-ribitylamino)uracil-binding positions include Y30, 61 to 63 (ALE), and 85 to 87 (CVI). 90–91 (ET) contacts (2S)-2-hydroxy-3-oxobutyl phosphate. The active-site Proton donor is H93. N118 provides a ligand contact to 5-amino-6-(D-ribitylamino)uracil. (2S)-2-hydroxy-3-oxobutyl phosphate is bound at residue R132.

This sequence belongs to the DMRL synthase family.

It catalyses the reaction (2S)-2-hydroxy-3-oxobutyl phosphate + 5-amino-6-(D-ribitylamino)uracil = 6,7-dimethyl-8-(1-D-ribityl)lumazine + phosphate + 2 H2O + H(+). The protein operates within cofactor biosynthesis; riboflavin biosynthesis; riboflavin from 2-hydroxy-3-oxobutyl phosphate and 5-amino-6-(D-ribitylamino)uracil: step 1/2. In terms of biological role, catalyzes the formation of 6,7-dimethyl-8-ribityllumazine by condensation of 5-amino-6-(D-ribitylamino)uracil with 3,4-dihydroxy-2-butanone 4-phosphate. This is the penultimate step in the biosynthesis of riboflavin. This chain is 6,7-dimethyl-8-ribityllumazine synthase, found in Methylobacterium radiotolerans (strain ATCC 27329 / DSM 1819 / JCM 2831 / NBRC 15690 / NCIMB 10815 / 0-1).